The sequence spans 804 residues: Leucine--tRNA ligase (804 aa).

The short motif at 39 to 50 (PYPSGKGLHVGH) is the 'HIGH' region element. A 'KMSKS' region motif is present at residues 573 to 577 (KMSKS). Lys-576 lines the ATP pocket.

Belongs to the class-I aminoacyl-tRNA synthetase family.

Its subcellular location is the cytoplasm. It carries out the reaction tRNA(Leu) + L-leucine + ATP = L-leucyl-tRNA(Leu) + AMP + diphosphate. In Lactobacillus delbrueckii subsp. bulgaricus (strain ATCC 11842 / DSM 20081 / BCRC 10696 / JCM 1002 / NBRC 13953 / NCIMB 11778 / NCTC 12712 / WDCM 00102 / Lb 14), this protein is Leucine--tRNA ligase.